A 717-amino-acid chain; its full sequence is Trimethylamine N-oxide transport system permease protein TmoV (717 aa).

A run of 17 helical transmembrane segments spans residues 10–30 (FFQWLFLLIVFFSLCFAIEVP), 69–89 (LPPLLGWLPIWINDSLFFLMN), 120–140 (FMTFLIELIREILLGGVETIV), 153–173 (WAELPGLPWTIVTAGAVILGY), 175–195 (LSGKGLALFAGLVMIYISVFG), 206–226 (FILVAAPLSFLFGLTFGVMAF), 238–258 (ILLVMQTMPQYAVLVPAIVLF), 265–285 (AVIITMVVAVPPMILLTLLGL), 319–339 (ILIGVNQVIMVCFSMAVISAF), 355–375 (QLNIGLALEAGLCISLIAILL), 402–422 (ILFFAAAVILGIIFSYLGSFY), 452–472 (IWDTFFHTLKIFNTWLIVDVL), 488–508 (LVLVIGAGYIIGGIRSALVVG), 527–547 (LYMATFGVFISTIIGFTVGII), 574–594 (LIPVMMLFGVTDTSVLIAVIV), 643–663 (MLGLNQTIVFALFMVIIGAFI), and 683–703 (GIGLTLGLCVAFIGLIFDHLI). Positions 200 to 379 (SMQTLSFILV…LIAILLDKMS (180 aa)) constitute an ABC transmembrane type-1 1 domain. One can recognise an ABC transmembrane type-1 2 domain in the interval 523–703 (ALVTLYMATF…FIGLIFDHLI (181 aa)).

It belongs to the binding-protein-dependent transport system permease family. As to quaternary structure, the complex is probably composed of two ATP-binding proteins (TmoW), two transmembrane proteins (TmoV) and a solute-binding protein (TmoX).

Its subcellular location is the cell inner membrane. In terms of biological role, part of the ABC transporter complex TmoXWV involved in trimethylamine N-oxide (TMAO) import. Responsible for the translocation of the substrate across the membrane. The protein is Trimethylamine N-oxide transport system permease protein TmoV of Pelagibacter ubique (strain HTCC1062).